We begin with the raw amino-acid sequence, 352 residues long: C-C chemokine receptor type 5 (352 aa).

Residues 1–30 are Extracellular-facing; that stretch reads MDYQVSSPTYDIDYNTSEPCQKINVKQIAA. Sulfotyrosine is present on Tyr-3. 2 O-linked (GalNAc...) serine glycosylation sites follow: Ser-6 and Ser-7. Sulfotyrosine is present on residues Tyr-10 and Tyr-14. 2 disulfides stabilise this stretch: Cys-20-Cys-269 and Cys-101-Cys-178. Residues 31–58 form a helical membrane-spanning segment; the sequence is RLLPLLYSLVFIFGFVGNILVVLILINC. Over 59 to 68 the chain is Cytoplasmic; that stretch reads KRLKSMTDIY. Residues 69 to 89 traverse the membrane as a helical segment; it reads LLNLAISDLLFLLTVPFWAHY. At 90 to 102 the chain is on the extracellular side; that stretch reads AAAQWDFGNTMCQ. A helical transmembrane segment spans residues 103–124; sequence LLTGLYFIGFFSGIFFIILLTI. Over 125–141 the chain is Cytoplasmic; sequence DRYLAIVHAVFALKART. A helical transmembrane segment spans residues 142-166; sequence VTFGVVTSVITWVVAVFASLPRIIF. At 167–198 the chain is on the extracellular side; sequence TRSQREGLHYTCSSHFPYSQYQFWKNFQTLKI. Residues 199 to 218 traverse the membrane as a helical segment; sequence VILGLVLPLLVMVICYSGIL. Over 219 to 235 the chain is Cytoplasmic; it reads KTLLRCRNEKKRHRAVR. Residues 236 to 260 traverse the membrane as a helical segment; it reads LIFTIMIVYFLFWAPYNIVLLLNTF. Residues 261 to 277 are Extracellular-facing; sequence QEFFGLNNCSSSNRLDQ. Residues 278–301 form a helical membrane-spanning segment; it reads AMQVTETLGMTHCCINPIIYAFVG. Residues 302 to 352 are Cytoplasmic-facing; the sequence is EKFRNYLLVFFQKHIAKRFCKCCSIFQQEAPERASSVYTRSTGEQEISVGL. Residues Cys-321, Cys-323, and Cys-324 are each lipidated (S-palmitoyl cysteine). 4 positions are modified to phosphoserine; by BARK1: Ser-336, Ser-337, Ser-342, and Ser-349.

The protein belongs to the G-protein coupled receptor 1 family. In terms of assembly, interacts with PRAF2. Efficient ligand binding to CCL3/MIP-1alpha and CCL4/MIP-1beta requires sulfation, O-glycosylation and sialic acid modifications. Glycosylation on Ser-6 is required for efficient binding of CCL4. Interacts with GRK2. Interacts with ARRB1 and ARRB2. Interacts with CNIH4. Interacts with S100A4; this interaction stimulates T-lymphocyte chemotaxis. Post-translationally, sulfated on at least 2 of the N-terminal tyrosines. Sulfation is required for efficient binding of the chemokines, CCL3 and CCL4. Palmitoylation in the C-terminal is important for cell surface expression. In terms of processing, phosphorylation on serine residues in the C-terminal is stimulated by binding CC chemokines especially by APO-RANTES. Post-translationally, O-glycosylated, but not N-glycosylated. Ser-6 appears to be the major site even if Ser-7 may be also O-glycosylated. Also sialylated glycans present which contribute to chemokine binding. Thr-16 and Ser-17 may also be glycosylated and, if so, with small moieties such as a T-antigen.

It localises to the cell membrane. In terms of biological role, receptor for a number of inflammatory CC-chemokines including CCL3/MIP-1-alpha, CCL4/MIP-1-beta and RANTES and subsequently transduces a signal by increasing the intracellular calcium ion level. May play a role in the control of granulocytic lineage proliferation or differentiation. Participates in T-lymphocyte migration to the infection site by acting as a chemotactic receptor. The chain is C-C chemokine receptor type 5 (CCR5) from Cercopithecus cephus (Moustached monkey).